The chain runs to 190 residues: ATP synthase subunit delta (190 aa).

This sequence belongs to the ATPase delta chain family. As to quaternary structure, F-type ATPases have 2 components, F(1) - the catalytic core - and F(0) - the membrane proton channel. F(1) has five subunits: alpha(3), beta(3), gamma(1), delta(1), epsilon(1). F(0) has three main subunits: a(1), b(2) and c(10-14). The alpha and beta chains form an alternating ring which encloses part of the gamma chain. F(1) is attached to F(0) by a central stalk formed by the gamma and epsilon chains, while a peripheral stalk is formed by the delta and b chains.

It is found in the cell inner membrane. In terms of biological role, f(1)F(0) ATP synthase produces ATP from ADP in the presence of a proton or sodium gradient. F-type ATPases consist of two structural domains, F(1) containing the extramembraneous catalytic core and F(0) containing the membrane proton channel, linked together by a central stalk and a peripheral stalk. During catalysis, ATP synthesis in the catalytic domain of F(1) is coupled via a rotary mechanism of the central stalk subunits to proton translocation. Functionally, this protein is part of the stalk that links CF(0) to CF(1). It either transmits conformational changes from CF(0) to CF(1) or is implicated in proton conduction. The polypeptide is ATP synthase subunit delta (Petrotoga mobilis (strain DSM 10674 / SJ95)).